Here is a 115-residue protein sequence, read N- to C-terminus: Ribonuclease P protein component (115 aa).

It belongs to the RnpA family. In terms of assembly, consists of a catalytic RNA component (M1 or rnpB) and a protein subunit.

It catalyses the reaction Endonucleolytic cleavage of RNA, removing 5'-extranucleotides from tRNA precursor.. Functionally, RNaseP catalyzes the removal of the 5'-leader sequence from pre-tRNA to produce the mature 5'-terminus. It can also cleave other RNA substrates such as 4.5S RNA. The protein component plays an auxiliary but essential role in vivo by binding to the 5'-leader sequence and broadening the substrate specificity of the ribozyme. This is Ribonuclease P protein component from Macrococcus caseolyticus (strain JCSC5402) (Macrococcoides caseolyticum).